The sequence spans 62 residues: UPF0434 protein BP2767 (62 aa).

It belongs to the UPF0434 family.

This Bordetella pertussis (strain Tohama I / ATCC BAA-589 / NCTC 13251) protein is UPF0434 protein BP2767.